Reading from the N-terminus, the 812-residue chain is Lon protease (812 aa).

A Lon N-terminal domain is found at 11–204; that stretch reads IPVLPLRDVV…YLMAMMESEI (194 aa). Residue 356–363 participates in ATP binding; it reads GPPGVGKT. The Lon proteolytic domain maps to 592-773; it reads ENRVGQVTGL…EEEQTLSLQN (182 aa). Active-site residues include serine 679 and lysine 722. The segment covering 745-764 has biased composition (basic and acidic residues); sequence KENPDNAKADQDRHPVKNNE. Residues 745–766 form a disordered region; sequence KENPDNAKADQDRHPVKNNEEE.

It belongs to the peptidase S16 family. Homohexamer. Organized in a ring with a central cavity. ATP binding and hydrolysis do not affect the oligomeric state of the enzyme.

The protein localises to the cytoplasm. It catalyses the reaction Hydrolysis of proteins in presence of ATP.. With respect to regulation, contains an allosteric site (distinct from its active site), whose occupancy by an unfolded polypeptide leads to enzyme activation. In terms of biological role, ATP-dependent serine protease that mediates the selective degradation of mutant and abnormal proteins as well as certain short-lived regulatory proteins. Required for cellular homeostasis and for survival from DNA damage and developmental changes induced by stress. Degrades polypeptides processively to yield small peptide fragments that are 5 to 10 amino acids long. Binds to DNA in a double-stranded, site-specific manner. Endogenous substrates include the regulatory proteins RcsA and SulA, the transcriptional activator SoxS, and UmuD. Its overproduction specifically inhibits translation through at least two different pathways, one of them being the YoeB-YefM toxin-antitoxin system. This Shigella dysenteriae serotype 1 (strain Sd197) protein is Lon protease.